A 144-amino-acid chain; its full sequence is Aklanonic acid methyl ester cyclase AcmA (144 aa).

Substrate is bound by residues Asn-51 and Gln-105.

The protein belongs to the polyketide cyclase DnrD family. In terms of assembly, homotetramer.

It catalyses the reaction methyl aklanonate = aklaviketone. Its pathway is antibiotic biosynthesis; daunorubicin biosynthesis. It participates in antibiotic biosynthesis; carminomycin biosynthesis. The protein operates within antibiotic biosynthesis; rhodomycin biosynthesis. It functions in the pathway antibiotic biosynthesis; aclacinomycin biosynthesis. Its function is as follows. Involved in the biosynthesis of aklavinone which is an important precursor common to the formation of the clinically significant anthracyclines such as carminomycin, daunorubicin (daunomycin), rhodomycin, aclacinomycin T (aklavin) and aclacinomycin A (aclarubicin). These compounds are aromatic polyketide antibiotics that exhibit high cytotoxicity and are widely applied in the chemotherapy of a variety of cancers. Catalyzes the cyclization of aklanonic acid methyl ester to yield aklaviketone. It is also able to use nogalonic acid methyl ester as substrate, but produces exclusively auraviketone with C9-R stereochemistry. The sequence is that of Aklanonic acid methyl ester cyclase AcmA (acma) from Streptomyces galilaeus.